A 494-amino-acid polypeptide reads, in one-letter code: Glycerol kinase 1 (494 aa).

Threonine 12 lines the ADP pocket. ATP-binding residues include threonine 12, threonine 13, and serine 14. Threonine 12 provides a ligand contact to sn-glycerol 3-phosphate. Arginine 16 is a binding site for ADP. Sn-glycerol 3-phosphate-binding residues include arginine 82, glutamate 83, tyrosine 134, and aspartate 243. The glycerol site is built by arginine 82, glutamate 83, tyrosine 134, aspartate 243, and glutamine 244. ADP contacts are provided by threonine 265 and glycine 308. Positions 265, 308, 312, and 408 each coordinate ATP. Positions 408 and 412 each coordinate ADP.

This sequence belongs to the FGGY kinase family.

The enzyme catalyses glycerol + ATP = sn-glycerol 3-phosphate + ADP + H(+). The protein operates within polyol metabolism; glycerol degradation via glycerol kinase pathway; sn-glycerol 3-phosphate from glycerol: step 1/1. Inhibited by fructose 1,6-bisphosphate (FBP). Key enzyme in the regulation of glycerol uptake and metabolism. Catalyzes the phosphorylation of glycerol to yield sn-glycerol 3-phosphate. The protein is Glycerol kinase 1 of Pseudomonas aeruginosa (strain ATCC 15692 / DSM 22644 / CIP 104116 / JCM 14847 / LMG 12228 / 1C / PRS 101 / PAO1).